Reading from the N-terminus, the 304-residue chain is Acetylglutamate kinase (304 aa).

Substrate-binding positions include 82–83 (GG), Arg-104, and Asn-197.

It belongs to the acetylglutamate kinase family. ArgB subfamily.

The protein localises to the cytoplasm. The catalysed reaction is N-acetyl-L-glutamate + ATP = N-acetyl-L-glutamyl 5-phosphate + ADP. Its pathway is amino-acid biosynthesis; L-arginine biosynthesis; N(2)-acetyl-L-ornithine from L-glutamate: step 2/4. Functionally, catalyzes the ATP-dependent phosphorylation of N-acetyl-L-glutamate. The sequence is that of Acetylglutamate kinase from Prochlorococcus marinus (strain SARG / CCMP1375 / SS120).